Here is a 514-residue protein sequence, read N- to C-terminus: G-protein coupled receptor Mth (514 aa).

The N-terminal stretch at 1–24 (MKTLLVLRISTVILVVLVIQKSYA) is a signal peptide. The Extracellular portion of the chain corresponds to 25–218 (DILECDYFDT…CLIVPSITGQ (194 aa)). Intrachain disulfides connect Cys29/Cys83, Cys85/Cys90, Cys94/Cys188, Cys95/Cys106, and Cys150/Cys209. Asn45 carries an N-linked (GlcNAc...) asparagine glycan. 4 N-linked (GlcNAc...) asparagine glycosylation sites follow: Asn109, Asn123, Asn170, and Asn198. The helical transmembrane segment at 219 to 239 (TVVMISSLICMVLTIAVYLFV) threads the bilayer. Over 240–248 (KKLQNLHGK) the chain is Cytoplasmic. Residues 249–269 (CFICYMVCLFMGYLFLLLDLW) traverse the membrane as a helical segment. Over 270–278 (QISISFCKP) the chain is Extracellular. A helical transmembrane segment spans residues 279-299 (AGFLGYFFVMAAFFWLSVISL). Topologically, residues 300–320 (HLWNTFRGSSHKANRFLFEHR) are cytoplasmic. The helical transmembrane segment at 321–341 (FLAYNTYAWGMAVVLTGITVL) threads the bilayer. At 342–370 (ADNIVENQDWNPRVGHEGHCWIYTQAWSA) the chain is on the extracellular side. A helical membrane pass occupies residues 371–391 (MLYFYGPMVFLIAFNITMFIL). The Cytoplasmic segment spans residues 392–424 (TAKRILGVKKDIQNFAHRQERKQKLNSDKQTYT). A helical membrane pass occupies residues 425–445 (FFLRLFIIMGLSWSLEIGSYF). Over 446–454 (SQSNQTWAN) the chain is Extracellular. Asn449 is a glycosylation site (N-linked (GlcNAc...) asparagine). Residues 455 to 475 (VFLVADYLNWSQGIIIFILFV) form a helical membrane-spanning segment. Topologically, residues 476–514 (LKRSTWRLLQESIRGEGEEVNNSEEEISLENTTTRNVLL) are cytoplasmic.

This sequence belongs to the G-protein coupled receptor 2 family. Mth subfamily. Homodimer.

Its subcellular location is the cell membrane. Its function is as follows. Involved in biological aging and stress response. Essential for adult survival. Required in the presynaptic motor neuron to up-regulate neurotransmitter exocytosis at larval glutamatergic neuromuscular junctions (NMJs). Regulates a step associated with docking and clustering of vesicles at release sites. SP/Acp70A and sun are agonists that activate mth in vitro. This Drosophila melanogaster (Fruit fly) protein is G-protein coupled receptor Mth (mth).